The following is a 159-amino-acid chain: Protein Smg homolog (159 aa).

Belongs to the Smg family.

This Vibrio vulnificus (strain CMCP6) protein is Protein Smg homolog.